The following is a 353-amino-acid chain: Photosystem II protein D1 (353 aa).

N-acetylthreonine is present on Thr-2. Thr-2 carries the post-translational modification Phosphothreonine. A run of 3 helical transmembrane segments spans residues 29–46, 118–133, and 142–156; these read YIGW…TATS, HFLL…EWEL, and WIAV…AATA. His-118 lines the chlorophyll a pocket. Tyr-126 lines the pheophytin a pocket. Positions 170 and 189 each coordinate [CaMn4O5] cluster. The chain crosses the membrane as a helical span at residues 197–218; that stretch reads FHMLGVAGVFGGSLFSAMHGSL. Residue His-198 participates in chlorophyll a binding. Residues His-215 and 264-265 each bind a quinone; that span reads SF. Fe cation is bound at residue His-215. His-272 is a Fe cation binding site. Residues 274–288 traverse the membrane as a helical segment; that stretch reads FLAAWPVVGIWFTAL. [CaMn4O5] cluster is bound by residues His-332, Glu-333, Asp-342, and Ala-344. Residues 345–353 constitute a propeptide that is removed on maturation; sequence SVEAPSVNA.

The protein belongs to the reaction center PufL/M/PsbA/D family. PSII is composed of 1 copy each of membrane proteins PsbA, PsbB, PsbC, PsbD, PsbE, PsbF, PsbH, PsbI, PsbJ, PsbK, PsbL, PsbM, PsbT, PsbX, PsbY, PsbZ, Psb30/Ycf12, at least 3 peripheral proteins of the oxygen-evolving complex and a large number of cofactors. It forms dimeric complexes. Requires The D1/D2 heterodimer binds P680, chlorophylls that are the primary electron donor of PSII, and subsequent electron acceptors. It shares a non-heme iron and each subunit binds pheophytin, quinone, additional chlorophylls, carotenoids and lipids. D1 provides most of the ligands for the Mn4-Ca-O5 cluster of the oxygen-evolving complex (OEC). There is also a Cl(-1) ion associated with D1 and D2, which is required for oxygen evolution. The PSII complex binds additional chlorophylls, carotenoids and specific lipids. as cofactor. Post-translationally, tyr-161 forms a radical intermediate that is referred to as redox-active TyrZ, YZ or Y-Z. In terms of processing, C-terminally processed by CTPA; processing is essential to allow assembly of the oxygen-evolving complex and thus photosynthetic growth.

It localises to the plastid. The protein localises to the chloroplast thylakoid membrane. It carries out the reaction 2 a plastoquinone + 4 hnu + 2 H2O = 2 a plastoquinol + O2. In terms of biological role, photosystem II (PSII) is a light-driven water:plastoquinone oxidoreductase that uses light energy to abstract electrons from H(2)O, generating O(2) and a proton gradient subsequently used for ATP formation. It consists of a core antenna complex that captures photons, and an electron transfer chain that converts photonic excitation into a charge separation. The D1/D2 (PsbA/PsbD) reaction center heterodimer binds P680, the primary electron donor of PSII as well as several subsequent electron acceptors. The protein is Photosystem II protein D1 of Oltmannsiellopsis viridis (Marine flagellate).